A 1159-amino-acid chain; its full sequence is Reverse gyrase 2 (1159 aa).

The segment at 1 to 40 (MALELIERGCPNCGGVISSDRLEKGLPCSKCLPKPTEEKV) adopts an RG N-terminal-type zinc-finger fold. The Zn(2+) site is built by Cys10, Cys13, Cys28, and Cys31. Residues Gln82 and 99-106 (APTGVGKT) contribute to the ATP site. The region spanning 86 to 275 (AKRVFMNQSF…LFRNLLGFDV (190 aa)) is the Helicase ATP-binding domain. The DEAD box signature appears at 196-199 (DDID). A topoisomerase I region spans residues 583–1159 (DLFKTTLVIV…LLKEEKAFKK (577 aa)). Residues 587-743 (TTLVIVESPN…NIKRAEFHEV (157 aa)) form the Toprim domain. Mg(2+)-binding residues include Glu593 and Asp712. The Topo IA-type catalytic domain occupies 759 to 1152 (DLNLVKAQLV…EVHRIKVLLK (394 aa)). Catalysis depends on Tyr902, which acts as the O-(5'-phospho-DNA)-tyrosine intermediate.

In the N-terminal section; belongs to the DEAD box helicase family. DDVD subfamily. The protein in the C-terminal section; belongs to the type IA topoisomerase family. As to quaternary structure, monomer. It depends on Zn(2+) as a cofactor. Mg(2+) is required as a cofactor.

It localises to the cytoplasm. The enzyme catalyses ATP + H2O = ADP + phosphate + H(+). Its function is as follows. Modifies the topological state of DNA by introducing positive supercoils in an ATP-dependent process, increasing the linking number in steps of +1. Binds to single-stranded DNA, transiently cleaves and then rejoins the ends, introducing a positive supercoil in the process. The scissile phosphodiester is attacked by the catalytic tyrosine of the enzyme, resulting in the formation of a DNA-(5'-phosphotyrosyl)-enzyme intermediate. Probably involved in rewinding DNA strands in regions of the chromosome that have opened up to allow replication, transcription, DNA repair and/or for DNA protection. The protein is Reverse gyrase 2 of Aquifex aeolicus (strain VF5).